We begin with the raw amino-acid sequence, 509 residues long: Solute carrier family 2, facilitated glucose transporter member 4 (509 aa).

Topologically, residues 1 to 23 (MPSGFQQIGSDDGEPPRQRVTGT) are cytoplasmic. The tract at residues 7-13 (QIGSDDG) is interaction with SRFBP1. The residue at position 10 (serine 10) is a Phosphoserine. The chain crosses the membrane as a helical span at residues 24-44 (LVLAVFSAVLGSLQFGYNIGV). The Extracellular portion of the chain corresponds to 45-80 (INAPQKVIEQSYNATWLGRQGPGGPDSIPQGTLTTL). Asparagine 57 carries an N-linked (GlcNAc...) asparagine glycan. The chain crosses the membrane as a helical span at residues 81 to 101 (WALSVAIFSVGGMISSFLIGI). Over 102–110 (ISQWLGRKR) the chain is Cytoplasmic. A helical transmembrane segment spans residues 111-131 (AMLANNVLAVLGGALMGLANA). At 132–141 (AASYEILILG) the chain is on the extracellular side. The helical transmembrane segment at 142–162 (RFLIGAYSGLTSGLVPMYVGE) threads the bilayer. Over 163 to 170 (IAPTHLRG) the chain is Cytoplasmic. A helical transmembrane segment spans residues 171 to 191 (ALGTLNQLAIVIGILVAQVLG). D-glucose is bound at residue glutamine 177. Topologically, residues 192-200 (LESMLGTAT) are extracellular. A helical membrane pass occupies residues 201–221 (LWPLLLALTVLPALLQLILLP). Topologically, residues 222 to 286 (FCPESPRYLY…QLLGSRTHRQ (65 aa)) are cytoplasmic. Cysteine 223 carries S-palmitoyl cysteine lipidation. Phosphoserine; by SGK1 is present on serine 274. The chain crosses the membrane as a helical span at residues 287–307 (PLIIAVVLQLSQQLSGINAVF). D-glucose is bound by residues 298–299 (QQ) and asparagine 304. At 308–322 (YYSTSIFESAGVGQP) the chain is on the extracellular side. Residues 323–343 (AYATIGAGVVNTVFTLVSVLL) form a helical membrane-spanning segment. Residue asparagine 333 participates in D-glucose binding. Topologically, residues 344–352 (VERAGRRTL) are cytoplasmic. A helical membrane pass occupies residues 353–373 (HLLGLAGMCGCAILMTVALLL). Residues 374–384 (LERVPAMSYVS) lie on the Extracellular side of the membrane. The helical transmembrane segment at 385-405 (IVAIFGFVAFFEIGPGPIPWF) threads the bilayer. 2 residues coordinate D-glucose: glutamate 396 and tryptophan 404. At 406–416 (IVAELFSQGPR) the chain is on the cytoplasmic side. Residues 417–437 (PAAMAVAGFSNWTCNFIVGMG) traverse the membrane as a helical segment. Over 438–444 (FQYVADA) the chain is Extracellular. Residues 445 to 465 (MGPYVFLLFAVLLLGFFIFTF) form a helical membrane-spanning segment. The Cytoplasmic portion of the chain corresponds to 466–508 (LKVPETRGRTFDQISAAFRRTPSLLEQEVKPSTELEYLGPDEN). Residue threonine 486 is modified to Phosphothreonine. Residue serine 488 is modified to Phosphoserine. Positions 489-490 (LL) match the Dileucine internalization motif motif.

The protein belongs to the major facilitator superfamily. Sugar transporter (TC 2.A.1.1) family. Glucose transporter subfamily. In terms of assembly, binds to DAXX. Interacts via its N-terminus with SRFBP1. Interacts with NDUFA9. Interacts with TRARG1; the interaction is required for proper SLC2A4 recycling after insulin stimulation. Post-translationally, sumoylated. In terms of processing, palmitoylated. Palmitoylation by ZDHHC7 controls the insulin-dependent translocation of GLUT4 to the plasma membrane. Expressed in skeletal and cardiac muscles. Expressed in brown and white adipose tissues.

The protein localises to the cell membrane. It is found in the endomembrane system. Its subcellular location is the cytoplasm. The protein resides in the perinuclear region. The enzyme catalyses D-glucose(out) = D-glucose(in). In terms of biological role, insulin-regulated facilitative glucose transporter, which plays a key role in removal of glucose from circulation. Response to insulin is regulated by its intracellular localization: in the absence of insulin, it is efficiently retained intracellularly within storage compartments in muscle and fat cells. Upon insulin stimulation, translocates from these compartments to the cell surface where it transports glucose from the extracellular milieu into the cell. The chain is Solute carrier family 2, facilitated glucose transporter member 4 from Mus musculus (Mouse).